The sequence spans 368 residues: Glutamate 5-kinase (368 aa).

Residue Lys-11 coordinates ATP. Residues Ser-51, Asp-138, and Asn-150 each coordinate substrate. ATP contacts are provided by residues 170–171 (TD) and 212–218 (TGGMATK). One can recognise a PUA domain in the interval 276–354 (AGEIIVDHGA…QQISQILGYE (79 aa)).

This sequence belongs to the glutamate 5-kinase family.

The protein resides in the cytoplasm. It catalyses the reaction L-glutamate + ATP = L-glutamyl 5-phosphate + ADP. The protein operates within amino-acid biosynthesis; L-proline biosynthesis; L-glutamate 5-semialdehyde from L-glutamate: step 1/2. In terms of biological role, catalyzes the transfer of a phosphate group to glutamate to form L-glutamate 5-phosphate. The protein is Glutamate 5-kinase of Photorhabdus laumondii subsp. laumondii (strain DSM 15139 / CIP 105565 / TT01) (Photorhabdus luminescens subsp. laumondii).